We begin with the raw amino-acid sequence, 244 residues long: Small ribosomal subunit protein uS3 (244 aa).

The KH type-2 domain occupies 39 to 110 (IRNFIQKKYS…QVRINVVEVE (72 aa)). The tract at residues 221–244 (GAIPRRKGSRKPQQFEDRSSNENS) is disordered. Residues 233-244 (QQFEDRSSNENS) are compositionally biased toward basic and acidic residues.

This sequence belongs to the universal ribosomal protein uS3 family. As to quaternary structure, part of the 30S ribosomal subunit. Forms a tight complex with proteins S10 and S14.

Binds the lower part of the 30S subunit head. Binds mRNA in the 70S ribosome, positioning it for translation. In Prochlorococcus marinus (strain MIT 9515), this protein is Small ribosomal subunit protein uS3.